We begin with the raw amino-acid sequence, 469 residues long: Ribulose bisphosphate carboxylase large chain (469 aa).

Residues 1-2 constitute a propeptide that is removed on maturation; sequence MS. Pro3 carries the post-translational modification N-acetylproline. At Lys14 the chain carries N6,N6,N6-trimethyllysine. The substrate site is built by Asn123 and Thr173. Lys175 functions as the Proton acceptor in the catalytic mechanism. Lys177 lines the substrate pocket. Mg(2+)-binding residues include Lys201, Asp203, and Glu204. At Lys201 the chain carries N6-carboxylysine. Residue His294 is the Proton acceptor of the active site. Arg295, His327, and Ser379 together coordinate substrate.

The protein belongs to the RuBisCO large chain family. Type I subfamily. Heterohexadecamer of 8 large chains and 8 small chains; disulfide-linked. The disulfide link is formed within the large subunit homodimers. Requires Mg(2+) as cofactor. In terms of processing, the disulfide bond which can form in the large chain dimeric partners within the hexadecamer appears to be associated with oxidative stress and protein turnover.

It localises to the plastid. It is found in the chloroplast. It catalyses the reaction 2 (2R)-3-phosphoglycerate + 2 H(+) = D-ribulose 1,5-bisphosphate + CO2 + H2O. The enzyme catalyses D-ribulose 1,5-bisphosphate + O2 = 2-phosphoglycolate + (2R)-3-phosphoglycerate + 2 H(+). In terms of biological role, ruBisCO catalyzes two reactions: the carboxylation of D-ribulose 1,5-bisphosphate, the primary event in carbon dioxide fixation, as well as the oxidative fragmentation of the pentose substrate in the photorespiration process. Both reactions occur simultaneously and in competition at the same active site. The protein is Ribulose bisphosphate carboxylase large chain of Iris ensata (Japanese iris).